The sequence spans 131 residues: DNA-directed RNA polymerase subunit omega (131 aa).

This sequence belongs to the RNA polymerase subunit omega family. As to quaternary structure, the RNAP catalytic core consists of 2 alpha, 1 beta, 1 beta' and 1 omega subunit. When a sigma factor is associated with the core the holoenzyme is formed, which can initiate transcription.

It carries out the reaction RNA(n) + a ribonucleoside 5'-triphosphate = RNA(n+1) + diphosphate. In terms of biological role, promotes RNA polymerase assembly. Latches the N- and C-terminal regions of the beta' subunit thereby facilitating its interaction with the beta and alpha subunits. The polypeptide is DNA-directed RNA polymerase subunit omega (Chelativorans sp. (strain BNC1)).